A 305-amino-acid chain; its full sequence is Ribonuclease Z (305 aa).

Positions 63, 65, 67, 68, 142, 209, and 267 each coordinate Zn(2+). Aspartate 67 (proton acceptor) is an active-site residue.

The protein belongs to the RNase Z family. Homodimer. Zn(2+) is required as a cofactor.

The enzyme catalyses Endonucleolytic cleavage of RNA, removing extra 3' nucleotides from tRNA precursor, generating 3' termini of tRNAs. A 3'-hydroxy group is left at the tRNA terminus and a 5'-phosphoryl group is left at the trailer molecule.. In terms of biological role, zinc phosphodiesterase, which displays some tRNA 3'-processing endonuclease activity. Probably involved in tRNA maturation, by removing a 3'-trailer from precursor tRNA. This is Ribonuclease Z from Nocardia farcinica (strain IFM 10152).